Here is a 34-residue protein sequence, read N- to C-terminus: Protamine-Y1/Y2 (34 aa).

The segment at 1–34 (PRRRRQASRPVRRRRRYRRSTAARRRRRVVRRRR) is disordered.

As to expression, testis.

Its subcellular location is the nucleus. The protein resides in the chromosome. In terms of biological role, protamines substitute for histones in the chromatin of sperm during the haploid phase of spermatogenesis. They compact sperm DNA into a highly condensed, stable and inactive complex. The sequence is that of Protamine-Y1/Y2 from Thunnus thynnus (Atlantic bluefin tuna).